An 89-amino-acid chain; its full sequence is Small ribosomal subunit protein uS15 (89 aa).

This sequence belongs to the universal ribosomal protein uS15 family. As to quaternary structure, part of the 30S ribosomal subunit. Forms a bridge to the 50S subunit in the 70S ribosome, contacting the 23S rRNA.

In terms of biological role, one of the primary rRNA binding proteins, it binds directly to 16S rRNA where it helps nucleate assembly of the platform of the 30S subunit by binding and bridging several RNA helices of the 16S rRNA. Functionally, forms an intersubunit bridge (bridge B4) with the 23S rRNA of the 50S subunit in the ribosome. This chain is Small ribosomal subunit protein uS15, found in Leuconostoc citreum (strain KM20).